A 401-amino-acid chain; its full sequence is ADP-forming sulfoacetate-CoA ligase subunit SqwK (401 aa).

One can recognise an ATP-grasp domain in the interval 9-217 (KTVFSEHKIP…DNSVFRQPRF (209 aa)). 35 to 96 (KSVGFPSVVK…EEAVHIDKEI (62 aa)) is an ATP binding site. Glu-185 and Asn-187 together coordinate Mg(2+).

This sequence belongs to the succinate/malate CoA ligase beta subunit family. Forms a complex with SqwL. Mg(2+) is required as a cofactor.

It catalyses the reaction sulfoacetate + ATP + CoA = sulfoacetyl-CoA + ADP + phosphate. Part of a variant of the sulfo-TK pathway, a D-sulfoquinovose degradation pathway that produces sulfoacetate. Hydrolyzes sulfoacetyl-coenzyme A (sulfoacetyl-CoA) to produce sulfoacetate and CoA coupled with the phosphorylation of ADP to generate ATP. Cannot use succinate, acetate or 3-hydroxypropionate, and shows only residual activities with malonate and 3-sulfopropanoate. In Acholeplasma sp, this protein is ADP-forming sulfoacetate-CoA ligase subunit SqwK.